A 115-amino-acid polypeptide reads, in one-letter code: MKPVVKEYTNDEQLMKDVEELQKMGVAKEDVYVLAHDDDRTERLADNTNANTIGAKETGFKHAVGNIFNKKGDELRNKIHEIGFSEDEAAQFEKRLDEGKVLLFVTDNEKVKAWA.

The chain is General stress protein 17M (yflT) from Bacillus subtilis (strain 168).